A 6306-amino-acid polypeptide reads, in one-letter code: Adhesion G-protein coupled receptor V1 (6306 aa).

A signal peptide spans 1 to 29 (MSVFLGPGMPSASLLVNLLSALLILFVFG). Calx-beta domains follow at residues 30-117 (ETEI…FHLT), 133-237 (VTVT…IQLK), 262-362 (PVRF…HIML), 388-488 (KPYG…LQIL), 645-745 (PAIA…TLSL), 763-861 (DLII…VVLS), 876-979 (VNIT…VILL), 993-1093 (ATLR…IILL), 1108-1208 (TVII…LKLV), 1444-1544 (AMPR…FILK), 1564-1665 (TIQK…RVTL), 1710-1809 (TGLP…VELL), 1850-1952 (ILVT…VSVL), 1966-2079 (TLTV…IELL), 2107-2206 (QLII…VQLM), 2222-2324 (VIII…VQLT), 2441-2541 (TLCL…FLIS), 2584-2676 (NISP…VSLV), 2689-2789 (DTVR…QVIL), 2814-2925 (LTVE…VNLT), 2947-3048 (TAQV…LILT), and 3063-3172 (LIIV…CTLF). At 30–5908 (ETEIRFTGQT…TDNLSSYNEA (5879 aa)) the chain is on the extracellular side. 6 EAR repeats span residues 3255-3296 (VFSV…RWQG), 3297-3345 (IFIP…TFTS), 3348-3393 (KLFL…RWNG), 3395-3439 (SFVL…RWSG), 3441-3488 (GFIN…IWEM), and 3492-3534 (SFRY…CWNS). Calx-beta domains are found at residues 3525–3625 (DMSA…KVQL), 3639–3739 (SVTI…IVTL), 3775–3875 (GLVG…VTIT), 3899–4006 (AEIM…ISLI), 4020–4123 (VTVV…IQLI), 4139–4239 (IIIR…EFQL), 4255–4354 (ANIT…LTIT), 4387–4489 (RIII…ILLT), 4512–4612 (SPFG…IIKL), 4634–4734 (EFGD…VIQL), 4992–5095 (SGFI…INLT), 5288–5332 (AVEE…YVFL), and 5368–5468 (IGFS…FVEL). In terms of domain architecture, GAIN-B spans 5747–5903 (SILALHWYPQ…AVYARTDNLS (157 aa)). Intrachain disulfides connect C5856–C5885 and C5873–C5887. Positions 5856 to 5903 (CLLWNQAAASWLSDSQFCKVVEETADYVECACSHMSVYAVYARTDNLS) are GPS. The chain crosses the membrane as a helical span at residues 5909–5929 (FFTSGFICISGLCLAVLSHIF). The Cytoplasmic portion of the chain corresponds to 5930–5939 (CARYSMFAAK). A helical membrane pass occupies residues 5940–5960 (LLTHMMAASLGTQILFLASAY). Over 5961–5979 (ASPQLAEESCSAMAAVTHY) the chain is Extracellular. A helical transmembrane segment spans residues 5980–6000 (LYLCQFSWMLIQSVNFWYVLV). Residues 6001 to 6010 (MNDEHTERRY) are Cytoplasmic-facing. A helical membrane pass occupies residues 6011–6031 (LLFFLLSWGLPAFVVILLIVI). At 6032 to 6059 (LKGIYHQSMSQIYGLIHGDLCFIPNVYA) the chain is on the extracellular side. The helical transmembrane segment at 6060–6080 (ALFTAALVPLTCLVVVFVVFI) threads the bilayer. Residues 6081–6104 (HAYQVKPQWKAYDDVFRGRTNAAE) are Cytoplasmic-facing. A helical membrane pass occupies residues 6105 to 6125 (IPLILYLFALISVTWLWGGLH). The Extracellular portion of the chain corresponds to 6126 to 6133 (MAYRHFWM). Residues 6134–6154 (LVLFVIFNSLQGLYVFMVYFI) form a helical membrane-spanning segment. Over 6155-6306 (LHNQMCCPMK…RRIPIADTHL (152 aa)) the chain is Cytoplasmic. Residues 6216 to 6248 (ASFQQGSQASPDLKPSPQNGATFPSSGGYGQGS) form a disordered region. The segment covering 6217 to 6240 (SFQQGSQASPDLKPSPQNGATFPS) has biased composition (polar residues).

The protein belongs to the G-protein coupled receptor 2 family. Adhesion G-protein coupled receptor (ADGR) subfamily. As to quaternary structure, forms a heterodimer, consisting of a large extracellular region (alpha subunit) non-covalently linked to a seven-transmembrane moiety (beta subunit). Component of USH2 complex, composed of ADGRV1, PDZD7, USH2A and WHRN. Interacts with USH2A and WHRN. Interacts (via the cytoplasmic region) with PDZD7. Interacts (via the cytoplasmic region) with MYO7A (via MyTH4-FERM domains). Autoproteolytically cleaved into 2 subunits, an extracellular alpha subunit and a seven-transmembrane subunit. As to expression, expressed at low levels in adult tissues.

It localises to the cell membrane. It is found in the cell projection. The protein localises to the stereocilium membrane. Its subcellular location is the photoreceptor inner segment. G-protein coupled receptor which has an essential role in the development of hearing and vision. Couples to G-alpha(i)-proteins, GNAI1/2/3, G-alpha(q)-proteins, GNAQ, as well as G-alpha(s)-proteins, GNAS, inhibiting adenylate cyclase (AC) activity and cAMP production. Required for the hair bundle ankle formation, which connects growing stereocilia in developing cochlear hair cells of the inner ear. In response to extracellular calcium, activates kinases PKA and PKC to regulate myelination by inhibiting the ubiquitination of MAG, thus enhancing the stability of this protein in myelin-forming cells of the auditory pathway. In retina photoreceptors, the USH2 complex is required for the maintenance of periciliary membrane complex that seems to play a role in regulating intracellular protein transport. Involved in the regulation of bone metabolism. In terms of biological role, cleaved ADGRV1 beta-subunit couples with G-alpha(i)-proteins, GNAI1/2/3, and constitutively inhibits adenylate cyclase (AC) activity with a stronger effect than full ADGRV1. The polypeptide is Adhesion G-protein coupled receptor V1 (Homo sapiens (Human)).